The sequence spans 967 residues: Isoleucine--tRNA ligase 2 (967 aa).

The 'HIGH' region signature appears at 58-68 (PYANGDIHIGH). Residues 437 to 446 (AVTEEAGATG) show a composition bias toward low complexity. A disordered region spans residues 437–466 (AVTEEAGATGEARKVGKAEEAEEAGPAKTL). Glutamate 598 contacts L-isoleucyl-5'-AMP. Positions 639–643 (KMSKS) match the 'KMSKS' region motif. Lysine 642 provides a ligand contact to ATP. Zn(2+) is bound by residues cysteine 922, cysteine 925, cysteine 942, and cysteine 945.

The protein belongs to the class-I aminoacyl-tRNA synthetase family. IleS type 1 subfamily. In terms of assembly, monomer. It depends on Zn(2+) as a cofactor.

It localises to the cytoplasm. It catalyses the reaction tRNA(Ile) + L-isoleucine + ATP = L-isoleucyl-tRNA(Ile) + AMP + diphosphate. Functionally, catalyzes the attachment of isoleucine to tRNA(Ile). As IleRS can inadvertently accommodate and process structurally similar amino acids such as valine, to avoid such errors it has two additional distinct tRNA(Ile)-dependent editing activities. One activity is designated as 'pretransfer' editing and involves the hydrolysis of activated Val-AMP. The other activity is designated 'posttransfer' editing and involves deacylation of mischarged Val-tRNA(Ile). The protein is Isoleucine--tRNA ligase 2 of Burkholderia mallei (strain ATCC 23344).